The primary structure comprises 299 residues: Phosphoribosylaminoimidazole-succinocarboxamide synthase (299 aa).

The tract at residues 259-279 (PESGWDRKSEQPPPPLPQHVV) is disordered.

Belongs to the SAICAR synthetase family.

It carries out the reaction 5-amino-1-(5-phospho-D-ribosyl)imidazole-4-carboxylate + L-aspartate + ATP = (2S)-2-[5-amino-1-(5-phospho-beta-D-ribosyl)imidazole-4-carboxamido]succinate + ADP + phosphate + 2 H(+). Its pathway is purine metabolism; IMP biosynthesis via de novo pathway; 5-amino-1-(5-phospho-D-ribosyl)imidazole-4-carboxamide from 5-amino-1-(5-phospho-D-ribosyl)imidazole-4-carboxylate: step 1/2. In Streptomyces avermitilis (strain ATCC 31267 / DSM 46492 / JCM 5070 / NBRC 14893 / NCIMB 12804 / NRRL 8165 / MA-4680), this protein is Phosphoribosylaminoimidazole-succinocarboxamide synthase.